Consider the following 376-residue polypeptide: 23S rRNA (uracil(747)-C(5))-methyltransferase RlmC (376 aa).

[4Fe-4S] cluster is bound by residues Cys-3, Cys-11, Cys-14, and Cys-87. S-adenosyl-L-methionine contacts are provided by Gln-212, Phe-241, Glu-262, and Asn-307. Catalysis depends on Cys-334, which acts as the Nucleophile.

It belongs to the class I-like SAM-binding methyltransferase superfamily. RNA M5U methyltransferase family. RlmC subfamily.

It carries out the reaction uridine(747) in 23S rRNA + S-adenosyl-L-methionine = 5-methyluridine(747) in 23S rRNA + S-adenosyl-L-homocysteine + H(+). Catalyzes the formation of 5-methyl-uridine at position 747 (m5U747) in 23S rRNA. This chain is 23S rRNA (uracil(747)-C(5))-methyltransferase RlmC, found in Yersinia pestis bv. Antiqua (strain Antiqua).